Consider the following 300-residue polypeptide: Ribosomal protein L11 methyltransferase (300 aa).

S-adenosyl-L-methionine contacts are provided by T152, G173, D195, and N234.

The protein belongs to the methyltransferase superfamily. PrmA family.

The protein resides in the cytoplasm. The catalysed reaction is L-lysyl-[protein] + 3 S-adenosyl-L-methionine = N(6),N(6),N(6)-trimethyl-L-lysyl-[protein] + 3 S-adenosyl-L-homocysteine + 3 H(+). In terms of biological role, methylates ribosomal protein L11. This chain is Ribosomal protein L11 methyltransferase, found in Burkholderia cenocepacia (strain HI2424).